The primary structure comprises 542 residues: N-substituted formamide deformylase (542 aa).

The propeptide occupies 1-2 (MT).

As to quaternary structure, homodimer. Zn(2+) is required as a cofactor.

It carries out the reaction N-benzylformamide + H2O = benzylamine + formate. Its activity is regulated as follows. Completely inhibited by HgCl(2), CuCl, CuCl(2) and AgNO(3). Partially inhibited by ZnCl(2) and SnCl(2). Almost completely inhibited by the reducing reagent DTT. Partially inhibited by phenylhydrazine. Moderately inhibited by phenanthroline and 8-hydroxyquinoline. Completely inhibited by the thiol-specific inhibitors N-ethylmaleimide and p-chloromercuribenzoate. Not inhibited by the carbonyl-specific inhibitors aminoguanidine and semicarbazide, the chelating agents alpha,alpha'-dipyridyl, KCN, diethyldithiocarbamate and EDTA, or the oxidizing reagents and serine-modifying reagents such as H(2)O(2), ammonium persulfate, phenylmethanesulfonyl fluoride and diisopropyl fluorophosphates. Hydrolyzes N-substituted formamides, but not amides. N-benzylformamide is the preferred substrate, while N-butylformamide is hydrolyzed at a much lower rate. Has very low activity towards allylformamide, N-(2-cyclohex-1-enylethyl)formamide and N-(alpha-methylbenzyl)formamide. The chain is N-substituted formamide deformylase from Arthrobacter pascens.